Consider the following 256-residue polypeptide: DNA repair protein RecO (256 aa).

It belongs to the RecO family.

Involved in DNA repair and RecF pathway recombination. This is DNA repair protein RecO from Rhizobium leguminosarum bv. trifolii (strain WSM2304).